Consider the following 267-residue polypeptide: Short chain dehydrogenase claC (267 aa).

Ile27, Asp73, Asn100, and Arg133 together coordinate NADP(+). Active-site proton donor residues include Ser149 and Ser150. Tyr164, Lys168, and Thr199 together coordinate NADP(+). The active-site Proton acceptor is Tyr164. The active-site Lowers pKa of active site Tyr is Lys168.

This sequence belongs to the short-chain dehydrogenases/reductases (SDR) family.

It participates in pigment biosynthesis. Non-reducing polyketide synthase; part of the gene cluster that mediates the biosynthesis of the bianthraquinone cladofulvin, a conidial pigment not required for virulence but that plays a role in fitness and resistance to environmental stresses including UV light and low-temperature stress. The pathway begins with the synthesis of atrochrysone thioester by the polyketide synthase (PKS) claG. The atrochrysone carboxyl ACP thioesterase claF then breaks the thioester bond and releases the atrochrysone carboxylic acid from claG. This compound is decarboxylated by claH to yield emodin, which is further converted to chrysophanol hydroquinone by the reductase claC and the dehydratase claB. The cytochrome monooxygenase P450 claM then catalyzes the dimerization of nataloe-emodin to cladofulvin. The protein is Short chain dehydrogenase claC of Passalora fulva (Tomato leaf mold).